The chain runs to 419 residues: Serine--tRNA ligase (419 aa).

226-228 (TSE) lines the L-serine pocket. ATP is bound by residues 257–259 (RRE) and Val-273. Glu-280 lines the L-serine pocket. Residue 344 to 347 (ELTS) coordinates ATP. Thr-379 is an L-serine binding site.

This sequence belongs to the class-II aminoacyl-tRNA synthetase family. Type-1 seryl-tRNA synthetase subfamily. In terms of assembly, homodimer. The tRNA molecule binds across the dimer.

The protein resides in the cytoplasm. It catalyses the reaction tRNA(Ser) + L-serine + ATP = L-seryl-tRNA(Ser) + AMP + diphosphate + H(+). It carries out the reaction tRNA(Sec) + L-serine + ATP = L-seryl-tRNA(Sec) + AMP + diphosphate + H(+). Its pathway is aminoacyl-tRNA biosynthesis; selenocysteinyl-tRNA(Sec) biosynthesis; L-seryl-tRNA(Sec) from L-serine and tRNA(Sec): step 1/1. Its function is as follows. Catalyzes the attachment of serine to tRNA(Ser). Is also able to aminoacylate tRNA(Sec) with serine, to form the misacylated tRNA L-seryl-tRNA(Sec), which will be further converted into selenocysteinyl-tRNA(Sec). This chain is Serine--tRNA ligase, found in Mycobacterium tuberculosis (strain CDC 1551 / Oshkosh).